A 313-amino-acid polypeptide reads, in one-letter code: Protein sprouty homolog 1 (313 aa).

Met-1 is modified (N-acetylmethionine). Positions 43 to 152 (QIKAIRGSNE…RSDRVIRTQP (110 aa)) are disordered. Residues 69 to 79 (PRPEKQERTHE) are compositionally biased toward basic and acidic residues. Residues 106–125 (SRSTSTGSAASSGSSSSVSS) are compositionally biased toward low complexity. The region spanning 177–289 (QCGKCKCGEC…CYDWTHRPGC (113 aa)) is the SPR domain.

The protein belongs to the sprouty family. As to quaternary structure, forms heterodimers with SPRY2. Interacts with TESK1. Interacts with CAV1 (via C-terminus).

The protein localises to the cytoplasm. The protein resides in the membrane. Its function is as follows. Inhibits fibroblast growth factor (FGF)-induced retinal lens fiber differentiation, probably by inhibiting FGF-mediated phosphorylation of ERK1/2. Inhibits TGFB-induced epithelial-to-mesenchymal transition in lens epithelial cells. The sequence is that of Protein sprouty homolog 1 (Spry1) from Mus musculus (Mouse).